The chain runs to 254 residues: Ribonuclease 3 (254 aa).

The RNase III domain occupies 24-154 (LRRLQETLGV…VIGALFLDSG (131 aa)). E67 is a Mg(2+) binding site. The active site involves D71. Positions 140 and 143 each coordinate Mg(2+). E143 is a catalytic residue. The DRBM domain occupies 181–250 (DYKSTLQVLA…ARLAWEQLSG (70 aa)).

The protein belongs to the ribonuclease III family. As to quaternary structure, homodimer. The cofactor is Mg(2+).

Its subcellular location is the cytoplasm. The catalysed reaction is Endonucleolytic cleavage to 5'-phosphomonoester.. Functionally, digests double-stranded RNA. Involved in the processing of primary rRNA transcript to yield the immediate precursors to the large and small rRNAs (23S and 16S). Processes some mRNAs, and tRNAs when they are encoded in the rRNA operon. Processes pre-crRNA and tracrRNA of type II CRISPR loci if present in the organism. This chain is Ribonuclease 3, found in Treponema pallidum (strain Nichols).